We begin with the raw amino-acid sequence, 111 residues long: Large ribosomal subunit protein uL24 (111 aa).

Positions 48–65 are enriched in basic and acidic residues; that stretch reads EKPSRSNREGGRTEREAP. The tract at residues 48-111 is disordered; sequence EKPSRSNREG…AKTTGEELDD (64 aa). Over residues 69 to 80 the composition is skewed to polar residues; sequence SNVNPIDSNGES. Positions 86–95 are enriched in basic and acidic residues; the sequence is KKVEDPDTGR.

Belongs to the universal ribosomal protein uL24 family. In terms of assembly, part of the 50S ribosomal subunit.

Its function is as follows. One of two assembly initiator proteins, it binds directly to the 5'-end of the 23S rRNA, where it nucleates assembly of the 50S subunit. Functionally, one of the proteins that surrounds the polypeptide exit tunnel on the outside of the subunit. This chain is Large ribosomal subunit protein uL24, found in Salinibacter ruber (strain DSM 13855 / M31).